A 159-amino-acid polypeptide reads, in one-letter code: NADH-quinone oxidoreductase subunit I (159 aa).

4Fe-4S ferredoxin-type domains lie at 51 to 80 (RRYENGEERCIACKLCEAVCPAQAIVIESD) and 90 to 119 (TRYDIDMTKCIYCGLCQEACPVDAIVEGPN). Cysteine 60, cysteine 63, cysteine 66, cysteine 70, cysteine 99, cysteine 102, cysteine 105, and cysteine 109 together coordinate [4Fe-4S] cluster.

The protein belongs to the complex I 23 kDa subunit family. In terms of assembly, NDH-1 is composed of 14 different subunits. Subunits NuoA, H, J, K, L, M, N constitute the membrane sector of the complex. [4Fe-4S] cluster serves as cofactor.

It localises to the cell inner membrane. The catalysed reaction is a quinone + NADH + 5 H(+)(in) = a quinol + NAD(+) + 4 H(+)(out). Its function is as follows. NDH-1 shuttles electrons from NADH, via FMN and iron-sulfur (Fe-S) centers, to quinones in the respiratory chain. The immediate electron acceptor for the enzyme in this species is believed to be ubiquinone. Couples the redox reaction to proton translocation (for every two electrons transferred, four hydrogen ions are translocated across the cytoplasmic membrane), and thus conserves the redox energy in a proton gradient. The polypeptide is NADH-quinone oxidoreductase subunit I (Rickettsia typhi (strain ATCC VR-144 / Wilmington)).